The primary structure comprises 424 residues: Zinc finger and BTB domain-containing protein 6 (424 aa).

In terms of domain architecture, BTB spans 33–97 (CDVSIYINDT…CYTGALEVKR (65 aa)). At Ser-202 the chain carries Phosphoserine. 4 consecutive C2H2-type zinc fingers follow at residues 301–323 (HQCP…LKMH), 326–348 (FLCL…IRGH), 354–376 (FQCT…LNIH), and 382–405 (YKCH…TSLH). Residues 403 to 424 (SLHGRSSGEKLPRHDLERQNLL) form a disordered region. The span at 408–424 (SSGEKLPRHDLERQNLL) shows a compositional bias: basic and acidic residues.

Its subcellular location is the nucleus. Its function is as follows. May be involved in transcriptional regulation. The chain is Zinc finger and BTB domain-containing protein 6 (ZBTB6) from Bos taurus (Bovine).